The following is a 148-amino-acid chain: Nucleoside diphosphate kinase (148 aa).

Residues Lys-9, Phe-57, Arg-85, Thr-91, Arg-102, and Asn-112 each coordinate ATP. Thr-91 is subject to Phosphothreonine. His-115 functions as the Pros-phosphohistidine intermediate in the catalytic mechanism. Ser-122 carries the phosphoserine modification.

This sequence belongs to the NDK family. As to quaternary structure, homotetramer. Mg(2+) is required as a cofactor.

It is found in the cytoplasm. It carries out the reaction a 2'-deoxyribonucleoside 5'-diphosphate + ATP = a 2'-deoxyribonucleoside 5'-triphosphate + ADP. It catalyses the reaction a ribonucleoside 5'-diphosphate + ATP = a ribonucleoside 5'-triphosphate + ADP. Its function is as follows. Major role in the synthesis of nucleoside triphosphates other than ATP. The ATP gamma phosphate is transferred to the NDP beta phosphate via a ping-pong mechanism, using a phosphorylated active-site intermediate. The chain is Nucleoside diphosphate kinase from Bacillus cereus (strain ATCC 14579 / DSM 31 / CCUG 7414 / JCM 2152 / NBRC 15305 / NCIMB 9373 / NCTC 2599 / NRRL B-3711).